We begin with the raw amino-acid sequence, 321 residues long: GDP-L-fucose synthase (321 aa).

Residues 10–16, 36–41, and 105–108 each bind NADP(+); these read GHRGMVG, RDELNL, and LGSS. Tyrosine 136 (proton donor/acceptor) is an active-site residue. Residues lysine 140, 163 to 166, and histidine 179 each bind NADP(+); that span reads PTNL. The substrate site is built by arginine 187, tryptophan 202, arginine 209, and aspartate 278.

The protein belongs to the NAD(P)-dependent epimerase/dehydratase family. Fucose synthase subfamily. As to quaternary structure, homodimer.

The protein localises to the cytoplasm. The enzyme catalyses GDP-beta-L-fucose + NADP(+) = GDP-4-dehydro-alpha-D-rhamnose + NADPH + H(+). It participates in nucleotide-sugar biosynthesis; GDP-L-fucose biosynthesis via de novo pathway; GDP-L-fucose from GDP-alpha-D-mannose: step 2/2. The protein operates within exopolysaccharide biosynthesis; colanic acid biosynthesis. With respect to regulation, subject to product inhibition by NADP and GDP-fucose. Catalyzes the two-step NADP-dependent conversion of GDP-4-dehydro-6-deoxy-D-mannose to GDP-fucose, involving an epimerase and a reductase reaction. The polypeptide is GDP-L-fucose synthase (Escherichia coli (strain K12)).